Consider the following 442-residue polypeptide: tRNA-2-methylthio-N(6)-dimethylallyladenosine synthase (442 aa).

Residues 2–120 form the MTTase N-terminal domain; the sequence is KKVFIRTFGC…LPKMIVDKET (119 aa). The [4Fe-4S] cluster site is built by C11, C49, C83, C157, C161, and C164. Residues 143–375 form the Radical SAM core domain; it reads RVEGGAAFVS…NEVIEAETAR (233 aa). A TRAM domain is found at 378-441; that stretch reads QTMVGTVQRC…TFSLRGKVVE (64 aa).

The protein belongs to the methylthiotransferase family. MiaB subfamily. In terms of assembly, monomer. Requires [4Fe-4S] cluster as cofactor.

It localises to the cytoplasm. It carries out the reaction N(6)-dimethylallyladenosine(37) in tRNA + (sulfur carrier)-SH + AH2 + 2 S-adenosyl-L-methionine = 2-methylsulfanyl-N(6)-dimethylallyladenosine(37) in tRNA + (sulfur carrier)-H + 5'-deoxyadenosine + L-methionine + A + S-adenosyl-L-homocysteine + 2 H(+). Its function is as follows. Catalyzes the methylthiolation of N6-(dimethylallyl)adenosine (i(6)A), leading to the formation of 2-methylthio-N6-(dimethylallyl)adenosine (ms(2)i(6)A) at position 37 in tRNAs that read codons beginning with uridine. This is tRNA-2-methylthio-N(6)-dimethylallyladenosine synthase from Neisseria meningitidis serogroup B (strain ATCC BAA-335 / MC58).